The sequence spans 197 residues: Class A basic helix-loop-helix protein 15 (197 aa).

The segment covering 1–12 (MKTKNRPPRRRT) has biased composition (basic residues). 2 disordered regions span residues 1–82 (MKTK…ERER) and 178–197 (QPQGHLQRYSTQIHSFREGS). Phosphothreonine is present on residues Thr-12 and Thr-25. The segment covering 65–82 (GRRENSVQRRLESNERER) has biased composition (basic and acidic residues). The bHLH domain occupies 72 to 124 (QRRLESNERERQRMHKLNNAFQALREVIPHVRADKKLSKIETLTLAKNYIKSL).

As to quaternary structure, forms homodimers or heterodimers with TCF3 gene products E12 and E47. These dimers bind to the E-box site, however, heterodimer with MYOD1 does not bind target DNA. In terms of tissue distribution, expressed in pancreatic tissue only in acinar cells. There is a complete absence of expression in intra- or interlobular pancreatic ducts and in all islet cells.

It localises to the nucleus. Functionally, plays a role in controlling the transcriptional activity of MyoD, ensuring that expanding myoblast populations remain undifferentiated. Repression may occur through muscle-specific E-box occupancy by homodimers. May also negatively regulate bHLH-mediated transcription through an N-terminal repressor domain. Serves as a key regulator of acinar cell function, stability, and identity. Also required for normal organelle localization in exocrine cells and for mitochondrial calcium ion transport. May function as a unique regulator of gene expression in several different embryonic and postnatal cell lineages. Binds to the E-box consensus sequence 5'-CANNTG-3'. This is Class A basic helix-loop-helix protein 15 (Bhlha15) from Mus musculus (Mouse).